A 151-amino-acid chain; its full sequence is Transcriptional regulator MraZ (151 aa).

SpoVT-AbrB domains follow at residues 5–52 (ANAI…PLSE) and 81–124 (AVDL…DEDA).

This sequence belongs to the MraZ family. As to quaternary structure, forms oligomers.

The protein resides in the cytoplasm. It is found in the nucleoid. The sequence is that of Transcriptional regulator MraZ from Pseudomonas syringae pv. tomato (strain ATCC BAA-871 / DC3000).